A 195-amino-acid chain; its full sequence is Phosphoheptose isomerase (195 aa).

Residues 36-195 form the SIS domain; that stretch reads LVDSLKGDGI…IIEKELFGLD (160 aa). 51-53 serves as a coordination point for substrate; that stretch reads NGG. Residues His-60 and Glu-64 each contribute to the Zn(2+) site. Substrate is bound by residues Glu-64, 95–96, 121–123, Ser-126, and Gln-173; these read ND and TTS. Residues Gln-173 and His-181 each contribute to the Zn(2+) site.

The protein belongs to the SIS family. GmhA subfamily. Zn(2+) serves as cofactor.

The protein resides in the cytoplasm. The catalysed reaction is 2 D-sedoheptulose 7-phosphate = D-glycero-alpha-D-manno-heptose 7-phosphate + D-glycero-beta-D-manno-heptose 7-phosphate. Its pathway is carbohydrate biosynthesis; D-glycero-D-manno-heptose 7-phosphate biosynthesis; D-glycero-alpha-D-manno-heptose 7-phosphate and D-glycero-beta-D-manno-heptose 7-phosphate from sedoheptulose 7-phosphate: step 1/1. Its function is as follows. Catalyzes the isomerization of sedoheptulose 7-phosphate in D-glycero-D-manno-heptose 7-phosphate. This is Phosphoheptose isomerase from Leptospira biflexa serovar Patoc (strain Patoc 1 / Ames).